Consider the following 264-residue polypeptide: MNSISSVFSSEQSVFIPYISLGDPDYDSCVIWADALIRGGAGILELGIPFTDPVADGPVIQKAFKRSLAHPFSMDKILEVTSEIHKLHPQIPLVYLTYFNPLFSMGLESFTERAKNSGIQGLIIPDLPFDTPEAEEFFSQLERKRIDFIHLVTPATTEDRIRSMKSLASGFIYYVTSYGVTGERGSIASGLEDRIRMVRKIVGLPVCAGFGISTSDQSKVISTYADGVIIGSAVQRIIEENGSDRNNCADKLLAYASEIRASMR.

Active-site proton acceptor residues include glutamate 45 and aspartate 56.

The protein belongs to the TrpA family. As to quaternary structure, tetramer of two alpha and two beta chains.

It catalyses the reaction (1S,2R)-1-C-(indol-3-yl)glycerol 3-phosphate + L-serine = D-glyceraldehyde 3-phosphate + L-tryptophan + H2O. It participates in amino-acid biosynthesis; L-tryptophan biosynthesis; L-tryptophan from chorismate: step 5/5. In terms of biological role, the alpha subunit is responsible for the aldol cleavage of indoleglycerol phosphate to indole and glyceraldehyde 3-phosphate. The sequence is that of Tryptophan synthase alpha chain from Leptospira interrogans serogroup Icterohaemorrhagiae serovar copenhageni (strain Fiocruz L1-130).